We begin with the raw amino-acid sequence, 299 residues long: MSINPIVLLFALLCTLLSPFSIGQSTIIHEQKSLYQDIVVFEHQDFRCLSFTAKKGERVQTCEYQDPQDKRIYFPYVRMTLAGLLFNPKPERILIIGLGGGSVPSALAELYPESHMDIVEIDPVVSQIAERYFYFQPSHNTRVHTGDARVYIKRAGLKGQKYDFILLDAFNGEYIPEHLMTREFLMETKQLLSSSGVLVANTFSTSKLYDHESATYRSVFGEFYNFKIPQESGNRVILSMLTSLPNQQALQQQAEALASALQPFAIEIENYPSLMTLEADWDEQARLLTDQFSPANLLK.

The 247-residue stretch at 6–252 (IVLLFALLCT…SLPNQQALQQ (247 aa)) folds into the PABS domain. Residues Gln-36, Glu-120, and 147-148 (DA) each bind S-methyl-5'-thioadenosine. Asp-168 (proton acceptor) is an active-site residue.

Belongs to the spermidine/spermine synthase family. Homodimer or homotetramer.

It localises to the cytoplasm. It catalyses the reaction S-adenosyl 3-(methylsulfanyl)propylamine + putrescine = S-methyl-5'-thioadenosine + spermidine + H(+). The protein operates within amine and polyamine biosynthesis; spermidine biosynthesis; spermidine from putrescine: step 1/1. Functionally, catalyzes the irreversible transfer of a propylamine group from the amino donor S-adenosylmethioninamine (decarboxy-AdoMet) to putrescine (1,4-diaminobutane) to yield spermidine. This is Polyamine aminopropyltransferase from Vibrio vulnificus (strain CMCP6).